Reading from the N-terminus, the 386-residue chain is Bifunctional enzyme IspD/IspF (386 aa).

Positions 1–231 (MKNGAVIIPA…REKKEPMQKI (231 aa)) are 2-C-methyl-D-erythritol 4-phosphate cytidylyltransferase. The interval 232-386 (RIGHGFDAHQ…SCHAVVLLQQ (155 aa)) is 2-C-methyl-D-erythritol 2,4-cyclodiphosphate synthase. Aspartate 238 and histidine 240 together coordinate a divalent metal cation. 4-CDP-2-C-methyl-D-erythritol 2-phosphate-binding positions include 238–240 (DAH) and 264–265 (HS). Histidine 272 contributes to the a divalent metal cation binding site. 4-CDP-2-C-methyl-D-erythritol 2-phosphate-binding positions include 286–288 (DIG), 362–365 (TTTE), tyrosine 369, and arginine 372.

It in the N-terminal section; belongs to the IspD/TarI cytidylyltransferase family. IspD subfamily. This sequence in the C-terminal section; belongs to the IspF family. It depends on a divalent metal cation as a cofactor.

It catalyses the reaction 2-C-methyl-D-erythritol 4-phosphate + CTP + H(+) = 4-CDP-2-C-methyl-D-erythritol + diphosphate. The catalysed reaction is 4-CDP-2-C-methyl-D-erythritol 2-phosphate = 2-C-methyl-D-erythritol 2,4-cyclic diphosphate + CMP. The protein operates within isoprenoid biosynthesis; isopentenyl diphosphate biosynthesis via DXP pathway; isopentenyl diphosphate from 1-deoxy-D-xylulose 5-phosphate: step 2/6. It participates in isoprenoid biosynthesis; isopentenyl diphosphate biosynthesis via DXP pathway; isopentenyl diphosphate from 1-deoxy-D-xylulose 5-phosphate: step 4/6. Bifunctional enzyme that catalyzes the formation of 4-diphosphocytidyl-2-C-methyl-D-erythritol from CTP and 2-C-methyl-D-erythritol 4-phosphate (MEP) (IspD), and catalyzes the conversion of 4-diphosphocytidyl-2-C-methyl-D-erythritol 2-phosphate (CDP-ME2P) to 2-C-methyl-D-erythritol 2,4-cyclodiphosphate (ME-CPP) with a corresponding release of cytidine 5-monophosphate (CMP) (IspF). The chain is Bifunctional enzyme IspD/IspF from Desulfotalea psychrophila (strain LSv54 / DSM 12343).